A 232-amino-acid polypeptide reads, in one-letter code: Ubiquinone biosynthesis O-methyltransferase (232 aa).

Positions 36, 55, 76, and 120 each coordinate S-adenosyl-L-methionine.

Belongs to the methyltransferase superfamily. UbiG/COQ3 family.

The catalysed reaction is a 3-demethylubiquinol + S-adenosyl-L-methionine = a ubiquinol + S-adenosyl-L-homocysteine + H(+). The enzyme catalyses a 3-(all-trans-polyprenyl)benzene-1,2-diol + S-adenosyl-L-methionine = a 2-methoxy-6-(all-trans-polyprenyl)phenol + S-adenosyl-L-homocysteine + H(+). The protein operates within cofactor biosynthesis; ubiquinone biosynthesis. O-methyltransferase that catalyzes the 2 O-methylation steps in the ubiquinone biosynthetic pathway. This Paraburkholderia phymatum (strain DSM 17167 / CIP 108236 / LMG 21445 / STM815) (Burkholderia phymatum) protein is Ubiquinone biosynthesis O-methyltransferase.